Reading from the N-terminus, the 344-residue chain is tRNA dimethylallyltransferase (344 aa).

An ATP-binding site is contributed by 43 to 50 (GPTCCGKS). Residue 45-50 (TCCGKS) coordinates substrate. Positions 68-71 (DSMQ) are interaction with substrate tRNA.

This sequence belongs to the IPP transferase family. In terms of assembly, monomer. Mg(2+) serves as cofactor.

The enzyme catalyses adenosine(37) in tRNA + dimethylallyl diphosphate = N(6)-dimethylallyladenosine(37) in tRNA + diphosphate. Functionally, catalyzes the transfer of a dimethylallyl group onto the adenine at position 37 in tRNAs that read codons beginning with uridine, leading to the formation of N6-(dimethylallyl)adenosine (i(6)A). This chain is tRNA dimethylallyltransferase, found in Protochlamydia amoebophila (strain UWE25).